An 88-amino-acid polypeptide reads, in one-letter code: Long neurotoxin 20 (88 aa).

Positions 1 to 21 (MKTLLLTLVVVTIVCLDLGNS) are cleaved as a signal peptide. Cystine bridges form between cysteine 24/cysteine 42, cysteine 35/cysteine 63, cysteine 48/cysteine 52, cysteine 67/cysteine 78, and cysteine 79/cysteine 84.

The protein belongs to the three-finger toxin family. Long-chain subfamily. Type II alpha-neurotoxin sub-subfamily. Expressed by the venom gland.

The protein localises to the secreted. In terms of biological role, binds with high affinity to muscular (alpha-1/CHRNA1) and neuronal (alpha-7/CHRNA7) nicotinic acetylcholine receptor (nAChR) and inhibits acetylcholine from binding to the receptor, thereby impairing neuromuscular and neuronal transmission. This Drysdalia coronoides (White-lipped snake) protein is Long neurotoxin 20.